Consider the following 139-residue polypeptide: Transcription antitermination protein NusB (139 aa).

It belongs to the NusB family.

In terms of biological role, involved in transcription antitermination. Required for transcription of ribosomal RNA (rRNA) genes. Binds specifically to the boxA antiterminator sequence of the ribosomal RNA (rrn) operons. The protein is Transcription antitermination protein NusB of Cronobacter sakazakii (strain ATCC BAA-894) (Enterobacter sakazakii).